The sequence spans 615 residues: DNA mismatch repair protein MutL (615 aa).

Residues 363–397 are disordered; the sequence is FAEPAVREPVAPRYTPAPASGSRPAAPWPNAQPGY. Over residues 378 to 391 the composition is skewed to low complexity; that stretch reads PAPASGSRPAAPWP.

The protein belongs to the DNA mismatch repair MutL/HexB family.

Its function is as follows. This protein is involved in the repair of mismatches in DNA. It is required for dam-dependent methyl-directed DNA mismatch repair. May act as a 'molecular matchmaker', a protein that promotes the formation of a stable complex between two or more DNA-binding proteins in an ATP-dependent manner without itself being part of a final effector complex. The chain is DNA mismatch repair protein MutL from Escherichia coli O157:H7 (strain EC4115 / EHEC).